We begin with the raw amino-acid sequence, 216 residues long: Thiopurine S-methyltransferase (216 aa).

Positions 10, 45, 66, and 123 each coordinate S-adenosyl-L-methionine.

The protein belongs to the class I-like SAM-binding methyltransferase superfamily. TPMT family.

It is found in the cytoplasm. The enzyme catalyses S-adenosyl-L-methionine + a thiopurine = S-adenosyl-L-homocysteine + a thiopurine S-methylether.. This chain is Thiopurine S-methyltransferase, found in Pseudomonas putida (strain ATCC 700007 / DSM 6899 / JCM 31910 / BCRC 17059 / LMG 24140 / F1).